We begin with the raw amino-acid sequence, 126 residues long: uncharacterized protein (126 aa).

Residues 1 to 28 (MAGEAVSEHTPDSQEVTVTSVVCCLDSV) are Cytoplasmic-facing. A helical membrane pass occupies residues 29–49 (VEIGHHVVYSVVTPLIVAVLI). The Extracellular segment spans residues 50-75 (DTMAGEAVLEHTSDSQEEIVTTVVCS). The helical transmembrane segment at 76–96 (VVPLVCFVVSVVCFVISVVEI) threads the bilayer. Position 97 (glycine 97) is a topological domain, cytoplasmic. A helical membrane pass occupies residues 98 to 118 (HHVVYSVVAPLTVTVAVETIA). The Extracellular portion of the chain corresponds to 119–126 (EEMDSVHT).

It localises to the membrane. This is an uncharacterized protein from Saccharomyces cerevisiae (strain ATCC 204508 / S288c) (Baker's yeast).